The chain runs to 341 residues: Phosphate acyltransferase (341 aa).

Belongs to the PlsX family. In terms of assembly, homodimer. Probably interacts with PlsY.

It localises to the cytoplasm. The enzyme catalyses a fatty acyl-[ACP] + phosphate = an acyl phosphate + holo-[ACP]. It participates in lipid metabolism; phospholipid metabolism. In terms of biological role, catalyzes the reversible formation of acyl-phosphate (acyl-PO(4)) from acyl-[acyl-carrier-protein] (acyl-ACP). This enzyme utilizes acyl-ACP as fatty acyl donor, but not acyl-CoA. The polypeptide is Phosphate acyltransferase (Vibrio vulnificus (strain CMCP6)).